A 500-amino-acid polypeptide reads, in one-letter code: Probable malate:quinone oxidoreductase (500 aa).

The protein belongs to the MQO family. The cofactor is FAD.

The enzyme catalyses (S)-malate + a quinone = a quinol + oxaloacetate. Its pathway is carbohydrate metabolism; tricarboxylic acid cycle; oxaloacetate from (S)-malate (quinone route): step 1/1. This Bacillus cytotoxicus (strain DSM 22905 / CIP 110041 / 391-98 / NVH 391-98) protein is Probable malate:quinone oxidoreductase.